The primary structure comprises 326 residues: Ribosome biogenesis protein BRX1 homolog (326 aa).

Basic and acidic residues predominate over residues M1–P17. Residues M1–K66 form a disordered region. Residues V22–E57 are compositionally biased toward acidic residues. A Brix domain is found at K75–G268.

The protein belongs to the BRX1 family.

It is found in the nucleus. Its subcellular location is the nucleolus. Functionally, required for biogenesis of the 60S ribosomal subunit. This Dictyostelium discoideum (Social amoeba) protein is Ribosome biogenesis protein BRX1 homolog (bxdc2).